The primary structure comprises 77 residues: UPF0349 protein lin2491 (77 aa).

Belongs to the UPF0349 family.

This Listeria innocua serovar 6a (strain ATCC BAA-680 / CLIP 11262) protein is UPF0349 protein lin2491.